The primary structure comprises 773 residues: Polyribonucleotide nucleotidyltransferase (773 aa).

Residues Asp532 and Asp538 each contribute to the Mg(2+) site. The KH domain maps to 598-657 (PRVITIKVPVDKIGEVIGPKGKVINAITEETGAQISIEDDGTVFVGATDGLSAQAAINKI). The S1 motif domain occupies 669–738 (GERFLGTVVK…KRGKISLVLV (70 aa)). Positions 749–773 (APADAGAAQEFGSGTAPADAATASS) are disordered.

Belongs to the polyribonucleotide nucleotidyltransferase family. Mg(2+) is required as a cofactor.

It localises to the cytoplasm. The enzyme catalyses RNA(n+1) + phosphate = RNA(n) + a ribonucleoside 5'-diphosphate. Involved in mRNA degradation. Catalyzes the phosphorolysis of single-stranded polyribonucleotides processively in the 3'- to 5'-direction. This is Polyribonucleotide nucleotidyltransferase from Mycobacterium leprae (strain Br4923).